A 95-amino-acid polypeptide reads, in one-letter code: Large ribosomal subunit protein bL25 (95 aa).

This sequence belongs to the bacterial ribosomal protein bL25 family. As to quaternary structure, part of the 50S ribosomal subunit; part of the 5S rRNA/L5/L18/L25 subcomplex. Contacts the 5S rRNA. Binds to the 5S rRNA independently of L5 and L18.

This is one of the proteins that binds to the 5S RNA in the ribosome where it forms part of the central protuberance. The polypeptide is Large ribosomal subunit protein bL25 (Actinobacillus pleuropneumoniae serotype 5b (strain L20)).